A 533-amino-acid polypeptide reads, in one-letter code: 2-succinyl-5-enolpyruvyl-6-hydroxy-3-cyclohexene-1-carboxylate synthase (533 aa).

It belongs to the TPP enzyme family. MenD subfamily. Homodimer. Mg(2+) is required as a cofactor. The cofactor is Mn(2+). It depends on thiamine diphosphate as a cofactor.

It catalyses the reaction isochorismate + 2-oxoglutarate + H(+) = 5-enolpyruvoyl-6-hydroxy-2-succinyl-cyclohex-3-ene-1-carboxylate + CO2. It functions in the pathway quinol/quinone metabolism; 1,4-dihydroxy-2-naphthoate biosynthesis; 1,4-dihydroxy-2-naphthoate from chorismate: step 2/7. Its pathway is quinol/quinone metabolism; menaquinone biosynthesis. Its function is as follows. Catalyzes the thiamine diphosphate-dependent decarboxylation of 2-oxoglutarate and the subsequent addition of the resulting succinic semialdehyde-thiamine pyrophosphate anion to isochorismate to yield 2-succinyl-5-enolpyruvyl-6-hydroxy-3-cyclohexene-1-carboxylate (SEPHCHC). The polypeptide is 2-succinyl-5-enolpyruvyl-6-hydroxy-3-cyclohexene-1-carboxylate synthase (Akkermansia muciniphila (strain ATCC BAA-835 / DSM 22959 / JCM 33894 / BCRC 81048 / CCUG 64013 / CIP 107961 / Muc)).